The chain runs to 528 residues: Low affinity inorganic phosphate transporter 4 (528 aa).

The Cytoplasmic portion of the chain corresponds to 1 to 18; sequence MALEVLEALDSARTQWYH. Residues 19–39 traverse the membrane as a helical segment; it reads VTAIVIAGMGFFTDAYDLFCI. Over 40 to 68 the chain is Extracellular; that stretch reads TTVSKLLGRLYYFDPSTGKPGKLPNNVNN. A helical transmembrane segment spans residues 69–89; it reads LVTGVALVGTLSGQLFFGYLG. Residues 90–96 lie on the Cytoplasmic side of the membrane; the sequence is DKLGRKK. The helical transmembrane segment at 97 to 117 threads the bilayer; it reads VYGVTLILMVACAICSGLSFG. The Extracellular portion of the chain corresponds to 118–122; it reads ASAKS. A helical membrane pass occupies residues 123-143; that stretch reads VMGTLCFFRFWLGFGIGGDYP. The Cytoplasmic portion of the chain corresponds to 144 to 158; the sequence is LSATIMSEYANKRTR. Residues 159-179 traverse the membrane as a helical segment; sequence GAFIAAVFAMQGVGIIFAGLV. Residues 180–208 are Extracellular-facing; it reads SMCLSAGFKASYHAPSFHDDPIMSTQPQG. The chain crosses the membrane as a helical span at residues 209–229; it reads DLMWRLVLMIGAVPAAMTYYW. Residues 230 to 292 lie on the Cytoplasmic side of the membrane; the sequence is RMKMPETGRY…NEFFTRHGRH (63 aa). The chain crosses the membrane as a helical span at residues 293 to 313; it reads LIGTMTSWFLLDIAFYSQNLT. Topologically, residues 314 to 341 are extracellular; it reads QKDIFPAMGLIDKDFEMNAIQEVFETSR. A helical transmembrane segment spans residues 342 to 362; sequence AMFVIALFGTFPGYWFTVFFI. Over 363–371 the chain is Cytoplasmic; that stretch reads EKLGRYKIQ. A helical membrane pass occupies residues 372–392; the sequence is LIGFFMMSVFMFIIGVKYDYL. Topologically, residues 393-401 are extracellular; sequence RNENSHMFA. Residues 402–422 form a helical membrane-spanning segment; sequence LLYGLTFFFANFGPNSTTFVL. The Cytoplasmic segment spans residues 423–433; that stretch reads PAELFPTRVRS. A helical membrane pass occupies residues 434 to 454; sequence TCHALSAAAGKAGAMVGAFGI. The Extracellular segment spans residues 455–467; the sequence is QNYTQKGEQKQIK. The N-linked (GlcNAc...) asparagine glycan is linked to Asn-456. Residues 468–488 traverse the membrane as a helical segment; that stretch reads HAMMILAVTNLIGFFCSFLVT. The Cytoplasmic portion of the chain corresponds to 489-528; sequence ETKGRSLEEISGEDGRESELTPTPPNNRVPTRQEPRSETM. Basic and acidic residues-rich tracts occupy residues 496-507 and 519-528; these read EEISGEDGRESE and TRQEPRSETM. Residues 496 to 528 form a disordered region; the sequence is EEISGEDGRESELTPTPPNNRVPTRQEPRSETM.

Belongs to the major facilitator superfamily. Phosphate:H(+) symporter (TC 2.A.1.9) family. As to expression, expressed only in mycorrhizal roots, exclusively in cortical cells containing arbuscules, upon arbuscular mycorrhizal (AM) symbiosis with AM fungi (e.g. Gigaspora margarita and Funnelliformis mosseae). Also observed in root tips of non-mycorrhizal roots, in a phosphate (Pi) depended-manner, highest expression levels being observed in low Pi conditions.

It localises to the cell membrane. The enzyme catalyses phosphate(in) + H(+)(in) = phosphate(out) + H(+)(out). Low-affinity transporter for external inorganic phosphate (Pi) probably involved in the acquisition of phosphate released by arbuscular mycorrhizal (AM) fungi (e.g. Gigaspora margarita and Funnelliformis mosseae) during AM symbiosis; required for propper mycorrhizal arbuscule morphology. Acts as a Pi-sensing machinery at the root tip level, independently of AM fungi, involved in the regulation of early root branching and lateral roots formation. In Lotus japonicus (Lotus corniculatus var. japonicus), this protein is Low affinity inorganic phosphate transporter 4.